The following is a 1049-amino-acid chain: MSRFFIDRPIFAWVLAIVAMLAGALSLAKMPISQYPNIAAPAVSIQVSYPGASAQTVQDTVVQVIEQQLSGLDGFRYMSAESASDGSMTIIVTFEQGTDPDIAQVQVQNKLQLATPRLPEEVQRQGLRVVKYQMNFFLVMSLVDRSGKLDNFDLGNLIASQLQDPISRIPGVGDFQLFGSPYAMRIWLDPGKLNSYQLTPTDVASAIREQNVQVSSGQLGGLPTRSGVQLNATVLGKTRMTTPSQFDEILVKVNPDGSQVRVKDVGRAELGADSFAISAQYKDSPTASLALRLSTGGNLLETVDAVKKLMEQQKAYLPDGVEVIYPYDTTPVVEASIESVVHTIFEAVVLVFLVMYLFLQSFRATLIPTLAVPVVLLATFALLPYFGLNINVLTMYAMVLAIGLLVDDAIVVVENVERLMHDEGLSPLEATRKSMDQISGALVGIGMVLSAVFVPMAFFGGSAGIIYQQFAITIVVCMGLSILVALVFTPALCVTILKAPEGNSHHERKGFFGWFNRIFDRGTRRFERGVGAMLKGRGRYLLAFLLITGGTGYLFTQIPKAFLPNEDQGLMMIEVRTPANASAERTEGVLQEVRDYLANDEGALVEHFMTVNGFNFAGRGQNSGLVLITFKDWKERHGAGQDVFSIAQRANQHFAKIKDASVMAFVPPAILEMGNAMGFNLYLQDNLGLGHEALMAARNQFLQLASQNPKLQAVRPNGKDDEPQFQVNIDDEKARALQVSIASINETMSAAWGSMYVNDFIDRGRVKRVYVQGEDISRISPEDFDKWYVRNSLGQMVPFSAFATGEWVNGSPKLERYGGISSLNILGEPAPGYSTGDAMIAIAEIMQQLPAGIGLSYTGLSYEEIQTGDQAPLLYALTVLIVFLCLAALYESWSVPVSVIMVVPLGILGAVLATLWRDLTADVYFQVGLMTTVGLSAKNAILIVEFAKELYEKEGYPIVKAAIEAAKLRLRPILMTSLAFTFGVLPMAIASGAGAGSQHSIATGVVGGMITATVLAVFFVPLFYVVVVKLFEGLMKRKPNAVKEVTHEV.

The next 12 helical transmembrane spans lie at 10 to 30, 339 to 359, 366 to 386, 392 to 412, 440 to 460, 470 to 490, 542 to 562, 871 to 891, 895 to 915, 927 to 947, 973 to 993, and 1008 to 1028; these read IFAW…LAKM, SVVH…YLFL, LIPT…LPYF, VLTM…AIVV, GALV…AFFG, FAIT…VFTP, LAFL…PKAF, APLL…ALYE, VPVS…LATL, VGLM…VEFA, ILMT…ASGA, and GMIT…VVVV.

Belongs to the resistance-nodulation-cell division (RND) (TC 2.A.6) family.

Its subcellular location is the cell inner membrane. Functionally, the inner membrane transporter component of an organic solvent efflux pump. Involved in export of a number of low log POW compounds including hexane (log POW 3.5), toluene (log POW 2.5) and dimethylphthalate (log POW 2.3). The solvent resistance phenotype has been postulated to depend on the operon expression level. The polypeptide is Solvent-resistant pump membrane transporter SrpB (srpB) (Pseudomonas putida (Arthrobacter siderocapsulatus)).